The following is a 485-amino-acid chain: uncharacterized protein (485 aa).

11 helical membrane-spanning segments follow: residues 79–99 (LVTL…LIFA), 117–137 (VFAL…FLVF), 139–159 (FFSG…LADL), 170–190 (VIYF…SGFI), 199–219 (WEFW…FLLL), 275–295 (ILIC…LVLI), 313–333 (GLMY…AMPI), 355–375 (LPMG…FGWT), 380–400 (IFWF…IMTS), 421–441 (GVKI…ESLF), and 448–468 (WGCT…PILF).

Belongs to the major facilitator superfamily. CAR1 family.

The protein localises to the golgi apparatus. It localises to the membrane. This is an uncharacterized protein from Schizosaccharomyces pombe (strain 972 / ATCC 24843) (Fission yeast).